Consider the following 320-residue polypeptide: Taste receptor type 2 member 129 (320 aa).

At 1-8 (MDGIVQNM) the chain is on the extracellular side. The chain crosses the membrane as a helical span at residues 9–29 (FTFIVIVEIIIGWIGNGFIAL). Residues 30–55 (VNCIHWYKRRKISALNQILTALAFSR) are Cytoplasmic-facing. Residues 56–76 (IYLLLTVFTVIAVSTLYTHVL) traverse the membrane as a helical segment. At 77–88 (VTRRVVKLINFH) the chain is on the extracellular side. A helical transmembrane segment spans residues 89 to 109 (LLFSNHFSMWLAACLGLYYFL). Residues 110-128 (KIAHFPNSIFVYLKMRINQ) lie on the Cytoplasmic side of the membrane. The chain crosses the membrane as a helical span at residues 129 to 149 (VVSGTLLMSLGLLFLNTLLIN). The Extracellular portion of the chain corresponds to 150 to 185 (SYIDTKIDDYREHLLYDFTSNNTASFYRVILVINNC). N-linked (GlcNAc...) asparagine glycosylation occurs at N170. Residues 186–206 (IFTSIPFTLSQSTFLLLIFSL) traverse the membrane as a helical segment. The Cytoplasmic segment spans residues 207–233 (WRHYKKMQQHAQRCRDVLADAHIRVLQ). Residues 234–254 (TMVTYVLLCAIFFLSLSMQIL) traverse the membrane as a helical segment. Residues 255–264 (RSELLKNILY) are Extracellular-facing. A helical membrane pass occupies residues 265–285 (VRFCEIVAAVFPSGHSCVLIC). Over 286–320 (RDTNLRGTFLSVLSWLKQRFTSWIPNINCRSSCIF) the chain is Cytoplasmic.

It belongs to the G-protein coupled receptor T2R family.

Its subcellular location is the membrane. Functionally, putative taste receptor which may play a role in the perception of bitterness. The polypeptide is Taste receptor type 2 member 129 (Mus musculus (Mouse)).